A 604-amino-acid chain; its full sequence is Replication protein E1 (604 aa).

The short motif at 76 to 78 is the Nuclear localization signal element; it reads KRK. 2 positions are modified to phosphoserine; by host: S81 and S89. A Nuclear export signal motif is present at residues 88-97; it reads LSPRLESISL. The interval 144 to 307 is DNA-binding region; sequence GSGAIDIDYL…TILGHQNAEA (164 aa). The SF3 helicase domain maps to 406-556; sequence VNFITFLAAF…FPMKPDNTPQ (151 aa). An ATP-binding site is contributed by 432–439; that stretch reads GPPNSGKS. K513 is covalently cross-linked (Glycyl lysine isopeptide (Lys-Gly) (interchain with G-Cter in SUMO)). The segment at 579–604 is disordered; the sequence is DQEEEGQHGESQRAFQCSARSANEHI. A compositionally biased stretch (polar residues) spans 591 to 604; the sequence is RAFQCSARSANEHI.

The protein belongs to the papillomaviridae E1 protein family. Can form hexamers. Interacts with E2 protein; this interaction increases E1 DNA binding specificity. Interacts with host DNA polymerase subunit POLA2. Interacts with host single stranded DNA-binding protein RPA1. Interacts with host TOP1; this interaction stimulates the enzymatic activity of TOP1. In terms of processing, phosphorylated. Post-translationally, sumoylated.

The protein localises to the host nucleus. It carries out the reaction Couples ATP hydrolysis with the unwinding of duplex DNA by translocating in the 3'-5' direction.. The enzyme catalyses ATP + H2O = ADP + phosphate + H(+). In terms of biological role, ATP-dependent DNA 3'-5' helicase required for initiation of viral DNA replication. It forms a complex with the viral E2 protein. The E1-E2 complex binds to the replication origin which contains binding sites for both proteins. During the initial step, a dimer of E1 interacts with a dimer of protein E2 leading to a complex that binds the viral origin of replication with high specificity. Then, a second dimer of E1 displaces the E2 dimer in an ATP-dependent manner to form the E1 tetramer. Following this, two E1 monomers are added to each half of the site, which results in the formation of two E1 trimers on the viral ori. Subsequently, two hexamers will be created. The double hexamer acts as a bi-directional helicase machinery and unwinds the viral DNA and then recruits the host DNA polymerase to start replication. The protein is Replication protein E1 of Human papillomavirus 12.